The chain runs to 482 residues: tRNA sulfurtransferase (482 aa).

Positions 61 to 165 (LAIRDALTRI…DDRLLLIKGR (105 aa)) constitute a THUMP domain. ATP is bound by residues 183–184 (LI), Lys-265, Gly-287, and Gln-296. Cys-344 and Cys-456 are disulfide-bonded. Residues 404–482 (FGPNDVILDI…GFNNVKVYRP (79 aa)) enclose the Rhodanese domain. Catalysis depends on Cys-456, which acts as the Cysteine persulfide intermediate.

The protein belongs to the ThiI family.

It is found in the cytoplasm. It carries out the reaction [ThiI sulfur-carrier protein]-S-sulfanyl-L-cysteine + a uridine in tRNA + 2 reduced [2Fe-2S]-[ferredoxin] + ATP + H(+) = [ThiI sulfur-carrier protein]-L-cysteine + a 4-thiouridine in tRNA + 2 oxidized [2Fe-2S]-[ferredoxin] + AMP + diphosphate. The catalysed reaction is [ThiS sulfur-carrier protein]-C-terminal Gly-Gly-AMP + S-sulfanyl-L-cysteinyl-[cysteine desulfurase] + AH2 = [ThiS sulfur-carrier protein]-C-terminal-Gly-aminoethanethioate + L-cysteinyl-[cysteine desulfurase] + A + AMP + 2 H(+). Its pathway is cofactor biosynthesis; thiamine diphosphate biosynthesis. Its function is as follows. Catalyzes the ATP-dependent transfer of a sulfur to tRNA to produce 4-thiouridine in position 8 of tRNAs, which functions as a near-UV photosensor. Also catalyzes the transfer of sulfur to the sulfur carrier protein ThiS, forming ThiS-thiocarboxylate. This is a step in the synthesis of thiazole, in the thiamine biosynthesis pathway. The sulfur is donated as persulfide by IscS. This chain is tRNA sulfurtransferase, found in Escherichia coli (strain ATCC 8739 / DSM 1576 / NBRC 3972 / NCIMB 8545 / WDCM 00012 / Crooks).